Here is a 447-residue protein sequence, read N- to C-terminus: 2-oxoadipate dioxygenase/decarboxylase (447 aa).

2-oxoadipate is bound by residues His68, Arg72, and His224. His68 lines the Fe(2+) pocket. Residues His224 and Glu290 each contribute to the Fe(2+) site. Val391 is a 2-oxoadipate binding site.

The protein belongs to the 2-oxoadipate dioxygenase/decarboxylase family. The cofactor is Fe(2+).

The enzyme catalyses 2-oxoadipate + O2 = (R)-2-hydroxyglutarate + CO2. Catalyzes the decarboxylation and hydroxylation of 2-oxoadipate (2OA) to form D-2-hydroxyglutarate (D-2-HGA). This chain is 2-oxoadipate dioxygenase/decarboxylase, found in Shigella flexneri.